The following is a 542-amino-acid chain: Chaperonin GroEL (542 aa).

Residues Thr-29–Pro-32, Asp-86–Thr-90, Gly-413, Asn-476–Ala-478, and Asp-492 each bind ATP. The segment at Glu-523–Met-542 is disordered. Over residues Ala-526–Met-542 the composition is skewed to low complexity.

The protein belongs to the chaperonin (HSP60) family. As to quaternary structure, forms a cylinder of 14 subunits composed of two heptameric rings stacked back-to-back. Interacts with the co-chaperonin GroES.

It is found in the cytoplasm. The catalysed reaction is ATP + H2O + a folded polypeptide = ADP + phosphate + an unfolded polypeptide.. In terms of biological role, together with its co-chaperonin GroES, plays an essential role in assisting protein folding. The GroEL-GroES system forms a nano-cage that allows encapsulation of the non-native substrate proteins and provides a physical environment optimized to promote and accelerate protein folding. In Streptococcus uberis (strain ATCC BAA-854 / 0140J), this protein is Chaperonin GroEL.